A 570-amino-acid chain; its full sequence is MTETQHIFRLTVHRFMDFPLSIYSSFTQLKPTPGLKKIIAVAAISGVSLIFLACHLKRKRGKKKINAPQTEPGQFILQCSRHVAEKGSSCSSSRQNLTLSLGSIKERGSQSHLNGDLCSKYSGSMQSLASVQSCHSCACINSNSWDKTDEDEINIPVTTPENLYLMGMELFEEALRRWEQALTFRSRQAEDEANCSSIKLGAGDAIAEENIEDVISADFIHKLEALLQRAYRLQEEFEATLGASDPASLANDIDKDTDITVMDNGGDFQQRDTLSIASTDSFLSAAELADNQDMRATCGLDSLYHHALYEEAMQLAEEGKVHCRVLRTEMLECLGDSDFLAKLHCIRQAFQEIILQRENRIFLMGTGRKLLSALIVKARKNPKKFEDAYFDMMSFLEQPESWDTVEKELLSRGMKCMNFYDIVLDFIVMDSLEDLENPPLSIQNVVRNRWLNSSFKETAVTSSCWSVLRQKKQEMKVPNGFFANFYTVCEQLCPVLAWGFLGPRSSLHDLCCFYKAQIMYFLKDIFDFEKVRYSDVEHLAEDIMKCLQRRTELTVVYTGEESARRPPVLN.

A helical transmembrane segment spans residues Gly34 to Cys54.

It belongs to the mitoguardin family. In terms of assembly, homodimer and heterodimer; forms heterodimers with miga2.

The protein resides in the mitochondrion outer membrane. In terms of biological role, regulator of mitochondrial fusion: acts by forming homo- and heterodimers at the mitochondrial outer membrane and facilitating the formation of pld6/MitoPLD dimers. May act by regulating phospholipid metabolism via pld6/MitoPLD. The sequence is that of Mitoguardin 1 from Xenopus laevis (African clawed frog).